Here is a 604-residue protein sequence, read N- to C-terminus: Glutamyl-tRNA(Gln) amidotransferase subunit B, mitochondrial (604 aa).

Residues 1–48 (MIRQCLSRRGAYSRYRLAARGVELAEPFHHQSSRPQGRRNWSSSPRCS) constitute a mitochondrion transit peptide. The tract at residues 28–57 (FHHQSSRPQGRRNWSSSPRCSLDIRTDTPR) is disordered. Residues 33–46 (SRPQGRRNWSSSPR) show a composition bias toward polar residues.

This sequence belongs to the GatB/GatE family. GatB subfamily. In terms of assembly, subunit of the heterotrimeric GatCAB amidotransferase (AdT) complex, composed of A, B and C subunits.

It is found in the mitochondrion. The enzyme catalyses L-glutamyl-tRNA(Gln) + L-glutamine + ATP + H2O = L-glutaminyl-tRNA(Gln) + L-glutamate + ADP + phosphate + H(+). Functionally, allows the formation of correctly charged Gln-tRNA(Gln) through the transamidation of misacylated Glu-tRNA(Gln) in the mitochondria. The reaction takes place in the presence of glutamine and ATP through an activated gamma-phospho-Glu-tRNA(Gln). The polypeptide is Glutamyl-tRNA(Gln) amidotransferase subunit B, mitochondrial (Blastomyces gilchristii (strain SLH14081) (Blastomyces dermatitidis)).